The primary structure comprises 510 residues: E3 ubiquitin-protein ligase TRIM7 (510 aa).

An RING-type zinc finger spans residues Cys29 to Arg81. Ser106 carries the phosphoserine; by RPS6KA5 modification. Residues Ala124–Leu165 form a B box-type zinc finger. Cys129, His132, Cys151, and His157 together coordinate Zn(2+). A coiled-coil region spans residues Leu165–Lys275. A B30.2/SPRY domain is found at Leu323–Pro510.

It belongs to the TRIM/RBCC family. In terms of assembly, forms homodimers. Interacts with GNIP2. Interacts with GYG1. Interacts with RNF187 (via C-terminus). Post-translationally, phosphorylated at Ser-106 by RPS6KA5/MSK1, which stimulates the ubiquitin ligase activity. In terms of processing, auto-ubiquitinates via 'Lys-63'-linked polyubiquitination. Highly expressed in antigen-presenting cells.

Its subcellular location is the nucleus. It is found in the cytoplasm. The protein resides in the golgi apparatus. The catalysed reaction is S-ubiquitinyl-[E2 ubiquitin-conjugating enzyme]-L-cysteine + [acceptor protein]-L-lysine = [E2 ubiquitin-conjugating enzyme]-L-cysteine + N(6)-ubiquitinyl-[acceptor protein]-L-lysine.. Its pathway is protein modification; protein ubiquitination. Functionally, E3 ubiquitin-protein ligase that have both tumor-promoting and tumor-suppressing activities and functions in several biological processes including innate immunity, regulation of ferroptosis as well as cell proliferation and migration. Acts as an antiviral effector against multiple viruses by targeting specific viral proteins for ubiquitination and degradation including norovirus NTPase protein. Mechanistically, recognizes the C-terminal glutamine-containing motif generated by viral proteases that process the polyproteins and trigger their ubiquitination and subsequent degradation. Mediates 'Lys-63'-linked polyubiquitination and stabilization of the JUN coactivator RNF187 in response to growth factor signaling via the MEK/ERK pathway, thereby regulating JUN transactivation and cellular proliferation. Promotes the TLR4-mediated signaling activation through its E3 ligase domain leading to production of pro-inflammatory cytokines and type I interferon. Also plays a negative role in the regulation of exogenous cytosolic DNA virus-triggered immune response. Mechanistically, enhances the 'Lys-48'-linked ubiquitination of STING1 leading to its proteasome-dependent degradation. Mediates the ubiquitination of the SIN3-HDAC chromatin remodeling complex component BRMS1. Modulates NCOA4-mediated ferritinophagy and ferroptosis in glioblastoma cells by ubiquitinating NCOA4, leading to its degradation. This Mus musculus (Mouse) protein is E3 ubiquitin-protein ligase TRIM7 (Trim7).